A 186-amino-acid polypeptide reads, in one-letter code: Shikimate kinase (186 aa).

ATP is bound at residue 15–20; that stretch reads GAGKTT. Residue threonine 19 participates in Mg(2+) binding. The substrate site is built by aspartate 37, arginine 61, and glycine 83. ATP is bound at residue arginine 121. Position 140 (arginine 140) interacts with substrate.

Belongs to the shikimate kinase family. In terms of assembly, monomer. It depends on Mg(2+) as a cofactor.

Its subcellular location is the cytoplasm. It carries out the reaction shikimate + ATP = 3-phosphoshikimate + ADP + H(+). The protein operates within metabolic intermediate biosynthesis; chorismate biosynthesis; chorismate from D-erythrose 4-phosphate and phosphoenolpyruvate: step 5/7. In terms of biological role, catalyzes the specific phosphorylation of the 3-hydroxyl group of shikimic acid using ATP as a cosubstrate. The protein is Shikimate kinase of Psychrobacter arcticus (strain DSM 17307 / VKM B-2377 / 273-4).